Here is a 355-residue protein sequence, read N- to C-terminus: Peptide chain release factor 1 (355 aa).

The residue at position 232 (Gln-232) is an N5-methylglutamine.

This sequence belongs to the prokaryotic/mitochondrial release factor family. In terms of processing, methylated by PrmC. Methylation increases the termination efficiency of RF1.

The protein localises to the cytoplasm. Its function is as follows. Peptide chain release factor 1 directs the termination of translation in response to the peptide chain termination codons UAG and UAA. The protein is Peptide chain release factor 1 of Kineococcus radiotolerans (strain ATCC BAA-149 / DSM 14245 / SRS30216).